The sequence spans 414 residues: Protein SOSEKI 2 (414 aa).

The interval 44–135 is DIX-like oligomerization domain; sequence RRVQVVYYLT…YVLKGSEITD (92 aa). The interval 171 to 273 is disordered; the sequence is SFDDAELYVG…GDPVEPGSGR (103 aa). Residues 173 to 192 show a composition bias toward acidic residues; sequence DDAELYVGEEEEEEDGEYEL. Residues 205–229 are compositionally biased toward polar residues; the sequence is PQSRCSRGVSTETMESTEQKPNLTK. Residues 230–242 are compositionally biased toward basic and acidic residues; it reads TEQDLQVRSDSSD. The short motif at 283 to 284 is the Association to cell membranes element; the sequence is CG.

It belongs to the SOSEKI family. As to quaternary structure, homodimer. Forms long polymer filaments with other SOKs proteins polymers (e.g. SOK1, SOK2, SOK3 and SOK4) crucial for polar localization and biological activity. Binds to ANGUSTIFOLIA (AN). Expressed during embryogenesis and in roots.

The protein localises to the cell membrane. Functionally, part of a three-gene cluster containing FLC, UFC and DFC, which is coordinately regulated in response to vernalization. Also regulated by FLX. SOSEKI proteins (SOK1-5) locally interpret global polarity cues and can influence cell division orientation to coordinate cell polarization relative to body axes, probably by guiding ANGUSTIFOLIA (AN) polarized localization. This Arabidopsis thaliana (Mouse-ear cress) protein is Protein SOSEKI 2.